We begin with the raw amino-acid sequence, 335 residues long: dTDP-glucose 4,6-dehydratase (335 aa).

Residues 11–12, 38–41, 61–62, 81–85, and Thr-100 contribute to the NAD(+) site; these read FI, DKLT, DI, and FAAET. Thr-85 is a substrate binding site. Thr-125 provides a ligand contact to substrate. Asp-126 acts as the Proton donor in catalysis. Active-site proton acceptor residues include Glu-127 and Tyr-149. 149–153 provides a ligand contact to NAD(+); it reads YSASK. Residue Asn-178 participates in substrate binding. An NAD(+)-binding site is contributed by Asn-179. Substrate contacts are provided by residues 188–189, 204–206, Arg-213, Asn-248, and 271–275; these read KI, PLY, and DRKGH.

This sequence belongs to the NAD(P)-dependent epimerase/dehydratase family. dTDP-glucose dehydratase subfamily. Requires NAD(+) as cofactor.

It catalyses the reaction dTDP-alpha-D-glucose = dTDP-4-dehydro-6-deoxy-alpha-D-glucose + H2O. Its pathway is antibiotic biosynthesis. In terms of biological role, involved in the biosynthesis of the two 2,6-deoxysugars, dTDP-L-oleandrose and dTDP-D-desosamine, attached to the macrolactone ring oleandolide to produce the aglycone antibiotic oleandomycin. Catalyzes the dehydration of dTDP-D-glucose to form dTDP-6-deoxy-D-xylo-4-hexulose via a three-step process involving oxidation, dehydration and reduction. This Streptomyces antibioticus protein is dTDP-glucose 4,6-dehydratase.